Here is a 153-residue protein sequence, read N- to C-terminus: Small ribosomal subunit protein uS19 (153 aa).

Belongs to the universal ribosomal protein uS19 family.

The chain is Small ribosomal subunit protein uS19 (RPS15) from Elaeis oleifera (American oil palm).